We begin with the raw amino-acid sequence, 71 residues long: Large ribosomal subunit protein bL31 (71 aa).

Zn(2+)-binding residues include cysteine 16, cysteine 18, cysteine 37, and cysteine 40.

The protein belongs to the bacterial ribosomal protein bL31 family. Type A subfamily. Part of the 50S ribosomal subunit. Zn(2+) is required as a cofactor.

Binds the 23S rRNA. In Pectobacterium atrosepticum (strain SCRI 1043 / ATCC BAA-672) (Erwinia carotovora subsp. atroseptica), this protein is Large ribosomal subunit protein bL31.